Consider the following 438-residue polypeptide: Xylose isomerase (438 aa).

2 residues coordinate Mg(2+): D306 and D308.

The protein belongs to the xylose isomerase family. Homotetramer. The cofactor is Mg(2+).

It is found in the cytoplasm. It catalyses the reaction alpha-D-xylose = alpha-D-xylulofuranose. This is Xylose isomerase from Pseudomonas fluorescens (strain SBW25).